The sequence spans 163 residues: MRIAIYPGTFDPVTNGHLDILKRATEFFDEVIVAVAVDSNKTTLFSLEERIQLLETAAEELSQVKIRGFEGLTVEFARQCGANAIIRGLRAMQDFEYEFQLALMNKKLAADIETIFLMTQSEFSFISSSSIKWAASLKGNISEFVPPHVERAIYKKYHPEIDD.

A substrate-binding site is contributed by T9. ATP is bound by residues 9–10 (TF) and H17. 3 residues coordinate substrate: K41, T73, and R87. Residues 88 to 90 (GLR), E98, and 123 to 129 (FSFISSS) contribute to the ATP site.

Belongs to the bacterial CoaD family. In terms of assembly, homohexamer. Mg(2+) serves as cofactor.

Its subcellular location is the cytoplasm. The catalysed reaction is (R)-4'-phosphopantetheine + ATP + H(+) = 3'-dephospho-CoA + diphosphate. It functions in the pathway cofactor biosynthesis; coenzyme A biosynthesis; CoA from (R)-pantothenate: step 4/5. Functionally, reversibly transfers an adenylyl group from ATP to 4'-phosphopantetheine, yielding dephospho-CoA (dPCoA) and pyrophosphate. The chain is Phosphopantetheine adenylyltransferase from Desulfitobacterium hafniense (strain Y51).